The primary structure comprises 1059 residues: Microtubule-associated protein 1S (1059 aa).

The necessary for the microtubule-organizing center localization stretch occupies residues Met-1 to Ser-797. Phosphoserine is present on residues Ser-321 and Ser-472. Disordered stretches follow at residues Pro-461–His-733 and Val-751–Pro-942. Composition is skewed to basic and acidic residues over residues Gly-466–Gly-486 and Pro-494–Lys-530. Residues Ser-547–Gln-557 are compositionally biased toward polar residues. Phosphoserine is present on Ser-582. Residues Ala-591 to Ser-603 are compositionally biased toward low complexity. A Phosphothreonine modification is found at Thr-638. Ser-640 is modified (phosphoserine). A compositionally biased stretch (basic and acidic residues) spans Glu-642–Glu-652. 2 positions are modified to phosphoserine: Ser-655 and Ser-657. Residues Pro-666 to Phe-1059 form a necessary for interaction with RASSF1 isoform A and isoform C region. Positions Pro-670–Pro-680 are enriched in low complexity. Residues Glu-714–Glu-966 are necessary for association with microtubules. Residues Ser-731 and Ser-759 each carry the phosphoserine modification. The segment covering Ser-759–Arg-769 has biased composition (low complexity). Residues Pro-783 to Asp-796 show a composition bias toward polar residues. Phosphoserine is present on Ser-809. Over residues Pro-825–Asp-836 the composition is skewed to pro residues. Composition is skewed to low complexity over residues Ala-873 to Lys-887 and Thr-923 to Pro-936. The tract at residues Ala-960 to Phe-1059 is necessary for association with actin. Positions Phe-967–Ala-991 are necessary for the mitochondrial aggregation and genome destruction.

It belongs to the MAP1 family. Heterodimer of a heavy and a light chain. Interacts with microtubules and actin. Both MAP1S heavy and light chains interact with microtubules. MAP1S light chain interacts with actin. Interacts (via C-terminus) with GAN (via Kelch domains). Interacts with ESR1, LRPPRC, RASSF1 isoform A and isoform C, microtubules and VCY2. Interacts with WDR47 (via N-terminus of light chain). In terms of tissue distribution, expressed in neurons (at protein level). Expressed in spermatocytes, spermatids and spermatozoa. Expressed in the cerebral cortex. Highly expressed in testis. Moderately expressed in the brain, colon, heart, kidney, liver, lung, placenta, small intestine, spleen and stomach. Weakly expressed in muscle.

The protein resides in the nucleus. Its subcellular location is the cytoplasm. It is found in the cytosol. It localises to the cytoskeleton. The protein localises to the spindle. Its function is as follows. Microtubule-associated protein that mediates aggregation of mitochondria resulting in cell death and genomic destruction (MAGD). Plays a role in anchoring the microtubule organizing center to the centrosomes. Binds to DNA. Plays a role in apoptosis. Involved in the formation of microtubule bundles. The protein is Microtubule-associated protein 1S (MAP1S) of Homo sapiens (Human).